The primary structure comprises 271 residues: Dermonecrotic toxin LarSicTox-alphaIB1c (271 aa).

His3 is an active-site residue. The Mg(2+) site is built by Glu23 and Asp25. The active-site Nucleophile is the His39. 2 cysteine pairs are disulfide-bonded: Cys43–Cys49 and Cys45–Cys188. Asp83 lines the Mg(2+) pocket. N-linked (GlcNAc...) asparagine glycosylation occurs at Asn248.

The protein belongs to the arthropod phospholipase D family. Class II subfamily. It depends on Mg(2+) as a cofactor. As to expression, expressed by the venom gland.

Its subcellular location is the secreted. The catalysed reaction is an N-(acyl)-sphingosylphosphocholine = an N-(acyl)-sphingosyl-1,3-cyclic phosphate + choline. It carries out the reaction an N-(acyl)-sphingosylphosphoethanolamine = an N-(acyl)-sphingosyl-1,3-cyclic phosphate + ethanolamine. The enzyme catalyses a 1-acyl-sn-glycero-3-phosphocholine = a 1-acyl-sn-glycero-2,3-cyclic phosphate + choline. It catalyses the reaction a 1-acyl-sn-glycero-3-phosphoethanolamine = a 1-acyl-sn-glycero-2,3-cyclic phosphate + ethanolamine. Dermonecrotic toxins cleave the phosphodiester linkage between the phosphate and headgroup of certain phospholipids (sphingolipid and lysolipid substrates), forming an alcohol (often choline) and a cyclic phosphate. This toxin acts on sphingomyelin (SM). It may also act on ceramide phosphoethanolamine (CPE), lysophosphatidylcholine (LPC) and lysophosphatidylethanolamine (LPE), but not on lysophosphatidylserine (LPS), and lysophosphatidylglycerol (LPG). It acts by transphosphatidylation, releasing exclusively cyclic phosphate products as second products. Induces dermonecrosis, hemolysis, increased vascular permeability, edema, inflammatory response, and platelet aggregation. The sequence is that of Dermonecrotic toxin LarSicTox-alphaIB1c from Loxosceles arizonica (Arizona brown spider).